Consider the following 292-residue polypeptide: Elongation factor Ts (292 aa).

The tract at residues 81-84 is involved in Mg(2+) ion dislocation from EF-Tu; sequence TDFV.

Belongs to the EF-Ts family.

It localises to the cytoplasm. Its function is as follows. Associates with the EF-Tu.GDP complex and induces the exchange of GDP to GTP. It remains bound to the aminoacyl-tRNA.EF-Tu.GTP complex up to the GTP hydrolysis stage on the ribosome. This Acidithiobacillus ferrooxidans (strain ATCC 23270 / DSM 14882 / CIP 104768 / NCIMB 8455) (Ferrobacillus ferrooxidans (strain ATCC 23270)) protein is Elongation factor Ts.